The following is a 140-amino-acid chain: Ribonucleases P/MRP protein subunit POP7 (140 aa).

The interval 1-21 (MALKKNTHNKSTKRVTKHPSL) is disordered. Ser-115 is subject to Phosphoserine.

The protein belongs to the histone-like Alba family. As to quaternary structure, component of nuclear RNase P and RNase MRP complexes. RNase P consists of an RNA moiety and at least 9 protein subunits including POP1, POP3, POP4, POP5, POP6, POP7, POP8, RPP1 and RPR2. RNase MRP complex consists of an RNA moiety and at least 10 protein subunits including POP1, POP3, POP4, POP5, POP6, POP7, POP8, RMP1, RPP1 and SNM1, many of which are shared with the RNase P complex.

It is found in the nucleus. It catalyses the reaction Endonucleolytic cleavage of RNA, removing 5'-extranucleotides from tRNA precursor.. Component of ribonuclease P, a protein complex that generates mature tRNA molecules by cleaving their 5'-ends. Also a component of RNase MRP, which cleaves pre-rRNA sequences. The chain is Ribonucleases P/MRP protein subunit POP7 (POP7) from Saccharomyces cerevisiae (strain ATCC 204508 / S288c) (Baker's yeast).